An 85-amino-acid polypeptide reads, in one-letter code: Small ribosomal subunit protein uS17 (85 aa).

This sequence belongs to the universal ribosomal protein uS17 family. In terms of assembly, part of the 30S ribosomal subunit.

One of the primary rRNA binding proteins, it binds specifically to the 5'-end of 16S ribosomal RNA. The sequence is that of Small ribosomal subunit protein uS17 from Natranaerobius thermophilus (strain ATCC BAA-1301 / DSM 18059 / JW/NM-WN-LF).